Here is a 306-residue protein sequence, read N- to C-terminus: Nucleotide-binding protein RSal33209_2275 (306 aa).

29-36 (GMSGAGRS) provides a ligand contact to ATP. 80–83 (DVRG) serves as a coordination point for GTP.

This sequence belongs to the RapZ-like family.

In terms of biological role, displays ATPase and GTPase activities. The protein is Nucleotide-binding protein RSal33209_2275 of Renibacterium salmoninarum (strain ATCC 33209 / DSM 20767 / JCM 11484 / NBRC 15589 / NCIMB 2235).